The chain runs to 311 residues: Olfactory receptor 5L1 (311 aa).

Topologically, residues 1–25 are extracellular; it reads MGKENCTTVAEFILLGLSDVPELRV. Asparagine 5 is a glycosylation site (N-linked (GlcNAc...) asparagine). Residues 26–46 traverse the membrane as a helical segment; sequence CLFLLFLLIYGVTLLANLGMI. The Cytoplasmic segment spans residues 47 to 54; the sequence is ALIQVSSR. The chain crosses the membrane as a helical span at residues 55–75; sequence LHTPMYFFLSHLSSVDFCYSS. The Extracellular segment spans residues 76–99; sequence IIVPKMLANIFNKDKAISFLGCMV. An intrachain disulfide couples cysteine 97 to cysteine 189. A helical transmembrane segment spans residues 100-120; sequence QFYLFCTCVVTEVFLLAVMAY. Topologically, residues 121–139 are cytoplasmic; sequence DRFVAICNPLLYTVTMSWK. Residues 140–160 traverse the membrane as a helical segment; that stretch reads VRVELASCCYFCGTVCSLIHL. At 161 to 196 the chain is on the extracellular side; sequence CLALRIPFYRSNVINHFFCDLPPVLSLACSDITVNE. An N-linked (GlcNAc...) asparagine glycan is attached at asparagine 195. Residues 197-217 form a helical membrane-spanning segment; that stretch reads TLLFLVATLNESVTIMIILTS. The Cytoplasmic segment spans residues 218–237; it reads YLLILTTILKMGSAEGRHKA. Residues 238–258 traverse the membrane as a helical segment; it reads FSTCASHLTAITVFHGTVLSI. The Extracellular portion of the chain corresponds to 259–271; that stretch reads YCRPSSGNSGDAD. Residues 272 to 292 traverse the membrane as a helical segment; it reads KVATVFYTVVIPMLNSVIYSL. The Cytoplasmic portion of the chain corresponds to 293 to 311; it reads RNKDVKEALRKVMGSKIHS.

This sequence belongs to the G-protein coupled receptor 1 family.

Its subcellular location is the cell membrane. Functionally, odorant receptor. In Homo sapiens (Human), this protein is Olfactory receptor 5L1 (OR5L1).